The sequence spans 156 residues: Ribonuclease pancreatic (156 aa).

Residues 1–26 (MGLEKSLVFFPLLVLLALGWVQPCLG) form the signal peptide. Residues Lys-33 and Arg-36 each coordinate substrate. His-38 serves as the catalytic Proton acceptor. 4 cysteine pairs are disulfide-bonded: Cys-54/Cys-112, Cys-68/Cys-123, Cys-86/Cys-138, and Cys-93/Cys-100. A substrate-binding site is contributed by 69–73 (KPVNT). A glycan (N-linked (GlcNAc...) asparagine) is linked at Asn-90. Substrate contacts are provided by Lys-94 and Arg-113. The active-site Proton donor is the His-147.

This sequence belongs to the pancreatic ribonuclease family. In terms of assembly, monomer. Interacts with and forms tight 1:1 complexes with RNH1. Dimerization of two such complexes may occur. Interaction with RNH1 inhibits this protein. In terms of tissue distribution, pancreas.

The protein localises to the secreted. The enzyme catalyses an [RNA] containing cytidine + H2O = an [RNA]-3'-cytidine-3'-phosphate + a 5'-hydroxy-ribonucleotide-3'-[RNA].. It catalyses the reaction an [RNA] containing uridine + H2O = an [RNA]-3'-uridine-3'-phosphate + a 5'-hydroxy-ribonucleotide-3'-[RNA].. Its function is as follows. Endonuclease that catalyzes the cleavage of RNA on the 3' side of pyrimidine nucleotides. Acts on single-stranded and double-stranded RNA. This Glis glis (Fat dormouse) protein is Ribonuclease pancreatic (RNASE1).